A 156-amino-acid chain; its full sequence is ATP synthase subunit b (156 aa).

A helical transmembrane segment spans residues 12-32; sequence LAFAIFVWFCMKLVWPPITAA.

Belongs to the ATPase B chain family. In terms of assembly, F-type ATPases have 2 components, F(1) - the catalytic core - and F(0) - the membrane proton channel. F(1) has five subunits: alpha(3), beta(3), gamma(1), delta(1), epsilon(1). F(0) has three main subunits: a(1), b(2) and c(10-14). The alpha and beta chains form an alternating ring which encloses part of the gamma chain. F(1) is attached to F(0) by a central stalk formed by the gamma and epsilon chains, while a peripheral stalk is formed by the delta and b chains.

It is found in the cell inner membrane. Functionally, f(1)F(0) ATP synthase produces ATP from ADP in the presence of a proton or sodium gradient. F-type ATPases consist of two structural domains, F(1) containing the extramembraneous catalytic core and F(0) containing the membrane proton channel, linked together by a central stalk and a peripheral stalk. During catalysis, ATP synthesis in the catalytic domain of F(1) is coupled via a rotary mechanism of the central stalk subunits to proton translocation. In terms of biological role, component of the F(0) channel, it forms part of the peripheral stalk, linking F(1) to F(0). The protein is ATP synthase subunit b of Stutzerimonas stutzeri (strain A1501) (Pseudomonas stutzeri).